Reading from the N-terminus, the 207-residue chain is Claudin-11 (207 aa).

Met-1 is a topological domain (cytoplasmic). Residues 2-22 form a helical membrane-spanning segment; it reads VATCLQVVGFVTSFVGWIGII. Residues 23 to 82 lie on the Extracellular side of the membrane; sequence VTTSTNDWVVTCGYTIPTCRKLDELGSKGLWADCVMATGLYHCKPLVDILILPGYVQACR. Residues 83 to 103 traverse the membrane as a helical segment; the sequence is ALMIAASVLGLPAILLLLTVL. Topologically, residues 104–122 are cytoplasmic; that stretch reads PCIRMGHEPGVAKYRRAQL. A helical transmembrane segment spans residues 123–143; the sequence is AGVMLVLVALCAMVATIWFPV. The Extracellular portion of the chain corresponds to 144–157; sequence CAHRETTIVSFGYS. The chain crosses the membrane as a helical span at residues 158–178; the sequence is LYAGWIGAVLCLVGGCVIVCC. At 179 to 207 the chain is on the cytoplasmic side; that stretch reads AGDAQAFGENRFYYSSGSSSPTHAKSAHV. Ser-193, Ser-194, Ser-197, and Ser-198 each carry phosphoserine.

This sequence belongs to the claudin family. Interacts with tetraspanin-3/TSPAN3. Interacts with OCLN.

The protein localises to the cell junction. It is found in the tight junction. It localises to the cell membrane. In terms of biological role, plays a major role in tight junction-specific obliteration of the intercellular space, through calcium-independent cell-adhesion activity. This Bos taurus (Bovine) protein is Claudin-11 (CLDN11).